Reading from the N-terminus, the 289-residue chain is Protease HtpX (289 aa).

The next 2 membrane-spanning stretches (helical) occupy residues 7–27 (LFLL…NIIF) and 38–58 (GGIL…SLFM). Residue His144 participates in Zn(2+) binding. Glu145 is an active-site residue. Residue His148 participates in Zn(2+) binding. Helical transmembrane passes span 155 to 175 (VTMT…SRII) and 194 to 214 (LVFW…ATMI). Residue Glu223 participates in Zn(2+) binding.

Belongs to the peptidase M48B family. Requires Zn(2+) as cofactor.

It localises to the cell inner membrane. The chain is Protease HtpX from Actinobacillus pleuropneumoniae serotype 5b (strain L20).